The primary structure comprises 316 residues: MTMYVKSNTTGKDMLSLLEWNKEELIDIIKLAVAMKTNPAHYSHILSGKILGMIFDKPSTRTRVSFEAGILQLGGQAIVMSSKELQIGRGEPIKDTAHVMSEYIDAIMIRTFSHEKVEELAYHAEIPIINGLTDLHHPCQALADLMTIYEWKDQLEGVKLAYIGDGNNVCHSLLLAGAMVGLDIRLAMPKGYEVDETILATAENLAKESGAKIFVTEDPKHAVTDADFIYTDVWTSMGQEEENAKRLADFGEKYQVNAELASIAKPDYHFLHCLPAHREEEVTAEIIDGNHSVIYQQAGNRLHAQKALLAAILEAK.

Carbamoyl phosphate is bound by residues 59–62, glutamine 86, arginine 110, and 137–140; these read STRT and HPCQ. Residues asparagine 168, aspartate 232, and 236-237 each bind L-ornithine; that span reads SM. Carbamoyl phosphate is bound by residues 273–274 and arginine 301; that span reads CL.

This sequence belongs to the aspartate/ornithine carbamoyltransferase superfamily. OTCase family.

The protein localises to the cytoplasm. The catalysed reaction is carbamoyl phosphate + L-ornithine = L-citrulline + phosphate + H(+). The protein operates within amino-acid biosynthesis; L-arginine biosynthesis; L-arginine from L-ornithine and carbamoyl phosphate: step 1/3. Reversibly catalyzes the transfer of the carbamoyl group from carbamoyl phosphate (CP) to the N(epsilon) atom of ornithine (ORN) to produce L-citrulline. The polypeptide is Ornithine carbamoyltransferase (Listeria innocua serovar 6a (strain ATCC BAA-680 / CLIP 11262)).